The following is a 226-amino-acid chain: ATP-dependent Clp protease proteolytic subunit 4 (226 aa).

Ser122 acts as the Nucleophile in catalysis. His147 is an active-site residue.

The protein belongs to the peptidase S14 family. Fourteen ClpP subunits assemble into 2 heptameric rings which stack back to back to give a disk-like structure with a central cavity, resembling the structure of eukaryotic proteasomes.

Its subcellular location is the cytoplasm. It carries out the reaction Hydrolysis of proteins to small peptides in the presence of ATP and magnesium. alpha-casein is the usual test substrate. In the absence of ATP, only oligopeptides shorter than five residues are hydrolyzed (such as succinyl-Leu-Tyr-|-NHMec, and Leu-Tyr-Leu-|-Tyr-Trp, in which cleavage of the -Tyr-|-Leu- and -Tyr-|-Trp bonds also occurs).. In terms of biological role, cleaves peptides in various proteins in a process that requires ATP hydrolysis. Has a chymotrypsin-like activity. Plays a major role in the degradation of misfolded proteins. The sequence is that of ATP-dependent Clp protease proteolytic subunit 4 from Streptomyces avermitilis (strain ATCC 31267 / DSM 46492 / JCM 5070 / NBRC 14893 / NCIMB 12804 / NRRL 8165 / MA-4680).